The sequence spans 146 residues: uncharacterized protein (146 aa).

Residues 7–27 (FVLSITIVLVILIIIAFIWYN) form a helical membrane-spanning segment.

The protein belongs to the asfivirus E146L family.

It localises to the host membrane. The protein localises to the virion. This is an uncharacterized protein from Ornithodoros (relapsing fever ticks).